Reading from the N-terminus, the 732-residue chain is Iron-sulfur clusters transporter ATM1, mitochondrial (732 aa).

The transit peptide at 1-55 (MGFGSCSRHALFTPAAFSGSFTTMTTSCFKRVYTAQIHGGDALGKRLPSVSSFSG) directs the protein to the mitochondrion. Over 56–143 (QLPRHGLHRQ…KNNPNVKFRV (88 aa)) the chain is Mitochondrial matrix. The segment at 71 to 114 (STSHRRQTSPPPSPRTTSQSPTVPSKASTTPPTSLNTSKPIATE) is disordered. Positions 85–95 (RTTSQSPTVPS) are enriched in low complexity. Residues 96–114 (KASTTPPTSLNTSKPIATE) show a composition bias toward polar residues. Residues 144 to 164 (IGALTLLVAGKVLNVQVPFFF) form a helical membrane-spanning segment. An ABC transmembrane type-1 domain is found at 144 to 432 (IGALTLLVAG…LGTVYRELRQ (289 aa)). Topologically, residues 165–181 (KTIVDSLNVPITESTTV) are mitochondrial intermembrane. Residues 182–202 (WVLAGASIAGYGAARILTTLF) form a helical membrane-spanning segment. Residues 203–262 (GELRNAVFASVAQNAIRKVARETFEHLLNMDMKFHLERQTGGLTRAIDRGTKGISFILSS) are Mitochondrial matrix-facing. Residues 263–283 (IVFHVIPTALEISMVCGILSW) form a helical membrane-spanning segment. A topological domain (mitochondrial intermembrane) is located at residue lysine 284. The helical transmembrane segment at 285 to 305 (FGWDFAAVTAITMLLYTWFTI) threads the bilayer. At 306-378 (KTTAWRTTFR…SLAALNSGQN (73 aa)) the chain is on the mitochondrial matrix side. Residues 311 to 315 (RTTFR) and 374 to 377 (NSGQ) contribute to the glutathione site. The chain crosses the membrane as a helical span at residues 379–399 (FIFSSALTMMMLLGAQGIVKG). Topologically, residues 400–405 (TMTVGD) are mitochondrial intermembrane. A helical membrane pass occupies residues 406 to 426 (LVLVNQLVFQLSLPLNFLGTV). Position 424 (glycine 424) interacts with glutathione. Over 427–732 (YRELRQSLID…LEVVDEKKKQ (306 aa)) the chain is Mitochondrial matrix. The 237-residue stretch at 466–702 (IEFRNVAFAY…PGGVYHRLWQ (237 aa)) folds into the ABC transporter domain. Residues tyrosine 475 and 499–506 (GPSGCGKS) each bind ATP. The tract at residues 708–732 (STQPTDEEIERQREELEVVDEKKKQ) is disordered. The span at 717–732 (ERQREELEVVDEKKKQ) shows a compositional bias: basic and acidic residues.

The protein belongs to the ABC transporter superfamily. ABCB family. Heavy Metal importer (TC 3.A.1.210) subfamily. As to quaternary structure, homodimer.

It is found in the mitochondrion inner membrane. Performs an essential function in the generation of cytoplasmic iron-sulfur proteins by mediating the ATP-dependent export of mitochondrial Fe/S cluster precursors synthesized by NFS1 and other mitochondrial proteins. Hydrolyzes ATP. Binds glutathione and may function by transporting a glutathione-conjugated iron-sulfur compound. Plays a role during copper stress, in a manner dependent on the copper metalloregulatory transcription factor CUF1. The sequence is that of Iron-sulfur clusters transporter ATM1, mitochondrial from Cryptococcus neoformans var. grubii serotype A (strain H99 / ATCC 208821 / CBS 10515 / FGSC 9487) (Filobasidiella neoformans var. grubii).